A 147-amino-acid polypeptide reads, in one-letter code: UPAR/Ly6 domain-containing protein CG9338 (147 aa).

Residues 1 to 23 (MVSSVKMILALTVLATVACTGYA) form the signal peptide. Residues 24–126 (IKCYQCDSLT…VCTEDECNGT (103 aa)) lie on the Extracellular side of the membrane. 5 cysteine pairs are disulfide-bonded: Cys26/Cys72, Cys29/Cys37, Cys51/Cys89, Cys101/Cys115, and Cys118/Cys123. Asn68 carries N-linked (GlcNAc...) asparagine glycosylation. Residue Asn124 is the site of GPI-anchor amidated asparagine attachment. The propeptide at 125–147 (GTSSLAPIAGVILLFFGLARLLA) is removed in mature form. The chain crosses the membrane as a helical span at residues 127-147 (SSLAPIAGVILLFFGLARLLA).

Belongs to the quiver family.

Its subcellular location is the cell membrane. In terms of biological role, may be involved in regulating neuron excitability. This is UPAR/Ly6 domain-containing protein CG9338 from Drosophila melanogaster (Fruit fly).